The sequence spans 520 residues: Hydroxymethylglutaryl-CoA synthase, cytoplasmic (520 aa).

A Phosphoserine modification is found at S4. 2 residues coordinate (3S)-3-hydroxy-3-methylglutaryl-CoA: D43 and A44. Residue 44–46 (AGK) coordinates CoA. Residue K46 is modified to N6-acetyllysine. Residue E95 is the Proton donor/acceptor of the active site. (3S)-3-hydroxy-3-methylglutaryl-CoA contacts are provided by C129, N167, T171, S221, and H264. C129 acts as the Acyl-thioester intermediate in catalysis. Residue N167 coordinates CoA. S221 provides a ligand contact to CoA. Residue H264 is the Proton donor/acceptor of the active site. The CoA site is built by K269 and K273. Positions 273, 343, and 377 each coordinate (3S)-3-hydroxy-3-methylglutaryl-CoA. The residue at position 273 (K273) is an N6-acetyllysine. Positions 488 to 520 (TATEHIPSPAKKVPRLPATSAESESAVISNGEH) are disordered. Residues S495 and S516 each carry the phosphoserine modification. Polar residues predominate over residues 507 to 520 (SAESESAVISNGEH).

It belongs to the thiolase-like superfamily. HMG-CoA synthase family. In terms of assembly, homodimer.

It localises to the cytoplasm. It catalyses the reaction acetoacetyl-CoA + acetyl-CoA + H2O = (3S)-3-hydroxy-3-methylglutaryl-CoA + CoA + H(+). It participates in metabolic intermediate biosynthesis; (R)-mevalonate biosynthesis; (R)-mevalonate from acetyl-CoA: step 2/3. Catalyzes the condensation of acetyl-CoA with acetoacetyl-CoA to form HMG-CoA, which is converted by HMG-CoA reductase (HMGCR) into mevalonate, a precursor for cholesterol synthesis. The protein is Hydroxymethylglutaryl-CoA synthase, cytoplasmic of Mus musculus (Mouse).